The primary structure comprises 127 residues: UPF0716 protein YtzA (127 aa).

4 consecutive transmembrane segments (helical) span residues 3 to 22 (FLFL…FLFL), 26 to 46 (IGIL…AAAA), 70 to 90 (AIAD…PGFL), and 93 to 115 (LAGA…FKWL).

This sequence belongs to the UPF0716 (FxsA) family.

Its subcellular location is the cell membrane. The sequence is that of UPF0716 protein YtzA (ytzA) from Bacillus subtilis (strain 168).